The chain runs to 159 residues: Ribosomal RNA large subunit methyltransferase H (159 aa).

S-adenosyl-L-methionine is bound by residues leucine 76, glycine 108, and 127–132 (FSKMTF).

This sequence belongs to the RNA methyltransferase RlmH family. Homodimer.

It is found in the cytoplasm. It carries out the reaction pseudouridine(1915) in 23S rRNA + S-adenosyl-L-methionine = N(3)-methylpseudouridine(1915) in 23S rRNA + S-adenosyl-L-homocysteine + H(+). Its function is as follows. Specifically methylates the pseudouridine at position 1915 (m3Psi1915) in 23S rRNA. In Bifidobacterium longum subsp. infantis (strain ATCC 15697 / DSM 20088 / JCM 1222 / NCTC 11817 / S12), this protein is Ribosomal RNA large subunit methyltransferase H.